Here is a 132-residue protein sequence, read N- to C-terminus: Large ribosomal subunit protein uL14 (132 aa).

Belongs to the universal ribosomal protein uL14 family. In terms of assembly, part of the 50S ribosomal subunit. Forms a cluster with proteins L3 and L24e, part of which may contact the 16S rRNA in 2 intersubunit bridges.

Functionally, binds to 23S rRNA. Forms part of two intersubunit bridges in the 70S ribosome. The sequence is that of Large ribosomal subunit protein uL14 from Methanocaldococcus jannaschii (strain ATCC 43067 / DSM 2661 / JAL-1 / JCM 10045 / NBRC 100440) (Methanococcus jannaschii).